Here is a 207-residue protein sequence, read N- to C-terminus: Ion-translocating oxidoreductase complex subunit G (207 aa).

A helical membrane pass occupies residues 11–31; that stretch reads GILLGFIALLCTIISTGIFFL. Thr175 is subject to FMN phosphoryl threonine.

Belongs to the RnfG family. The complex is composed of six subunits: RnfA, RnfB, RnfC, RnfD, RnfE and RnfG. The cofactor is FMN.

It is found in the cell inner membrane. Functionally, part of a membrane-bound complex that couples electron transfer with translocation of ions across the membrane. In Haemophilus influenzae (strain 86-028NP), this protein is Ion-translocating oxidoreductase complex subunit G.